Reading from the N-terminus, the 55-residue chain is Small ribosomal subunit protein eS31 (55 aa).

The Zn(2+) site is built by C27, C30, C45, and C48. The segment at 27–48 adopts a C4-type zinc-finger fold; it reads CSRCGKGFFMAQHKDRRSCGKC.

The protein belongs to the eukaryotic ribosomal protein eS31 family. In terms of assembly, part of the 30S ribosomal subunit. It depends on Zn(2+) as a cofactor.

This is Small ribosomal subunit protein eS31 from Cenarchaeum symbiosum (strain A).